Here is a 104-residue protein sequence, read N- to C-terminus: Putative heat shock protein PS1 (104 aa).

2 N-linked (GlcNAc...) asparagine glycosylation sites follow: Asn-11 and Asn-18. Asn-18 contacts ATP.

Belongs to the heat shock protein 90 family. In terms of assembly, homodimer.

The protein localises to the cytoplasm. Its function is as follows. Putative molecular chaperone that may promote the maturation, structural maintenance and proper regulation of specific target proteins. This is Putative heat shock protein PS1 from Pinus strobus (Eastern white pine).